Here is a 464-residue protein sequence, read N- to C-terminus: Sushi repeat-containing protein SRPX (464 aa).

Residues 1–30 form the signal peptide; sequence MGSPAHRPALLLLLPPLLLLLLLRVPPSRS. The O-linked (Xyl...) (chondroitin sulfate) serine glycan is linked to Ser-34. 5 disulfide bridges follow: Cys-57–Cys-85, Cys-69–Cys-103, Cys-89–Cys-115, Cys-120–Cys-161, and Cys-147–Cys-174. Sushi domains are found at residues 57-117 and 118-176; these read CSPI…ICKQ and KRCP…SCVD. The region spanning 177-259 is the HYR domain; that stretch reads MEPPRIKCPS…TCKFRVKVRV (83 aa). Positions 260–319 constitute a Sushi 3 domain; it reads KRCGKLNAPENGYMKCSSDGDNYGATCEFSCIGGYELQGSPARVCQSNLAWSGTEPTCAA. 2 disulfides stabilise this stretch: Cys-262-Cys-304 and Cys-290-Cys-317.

As to expression, detected in fibroblasts (at protein level). Retina and heart; less in placenta, pancreas, lung, liver, skeletal muscle, kidney and brain.

Its subcellular location is the cell surface. May be involved in phagocytosis during disk shedding, cell adhesion to cells other than the pigment epithelium or signal transduction. This Homo sapiens (Human) protein is Sushi repeat-containing protein SRPX (SRPX).